Here is a 359-residue protein sequence, read N- to C-terminus: 3-isopropylmalate dehydrogenase (359 aa).

Substrate contacts are provided by R96, R106, R134, and D223. Residues D223, D247, and D251 each coordinate Mg(2+). 281 to 293 is a binding site for NAD(+); it reads GSAPDIAGQGIAN.

This sequence belongs to the isocitrate and isopropylmalate dehydrogenases family. LeuB type 1 subfamily. In terms of assembly, homodimer. The cofactor is Mg(2+). Requires Mn(2+) as cofactor.

It localises to the cytoplasm. The catalysed reaction is (2R,3S)-3-isopropylmalate + NAD(+) = 4-methyl-2-oxopentanoate + CO2 + NADH. Its pathway is amino-acid biosynthesis; L-leucine biosynthesis; L-leucine from 3-methyl-2-oxobutanoate: step 3/4. Functionally, catalyzes the oxidation of 3-carboxy-2-hydroxy-4-methylpentanoate (3-isopropylmalate) to 3-carboxy-4-methyl-2-oxopentanoate. The product decarboxylates to 4-methyl-2 oxopentanoate. In Chromohalobacter salexigens (strain ATCC BAA-138 / DSM 3043 / CIP 106854 / NCIMB 13768 / 1H11), this protein is 3-isopropylmalate dehydrogenase.